Here is a 517-residue protein sequence, read N- to C-terminus: Forkhead box protein N4 (517 aa).

A DNA-binding region (fork-head) is located at residues 193–289 (KPIYSYSCLI…EEMHKWKRKD (97 aa)). 2 disordered regions span residues 365–398 (VQPQ…LPHP) and 497–517 (SGTS…IALL).

It localises to the nucleus. Functionally, transcription factor essential for neural and some non-neural tissues development, such as retina and lung respectively. Binds to an 11-bp consensus sequence containing the invariant tetranucleotide 5'-ACGC-3'. During development of the central nervous system, is required to specify the amacrine and horizontal cell fates from multipotent retinal progenitors while suppressing the alternative photoreceptor cell fates through activating DLL4-NOTCH signaling. Also acts synergistically with ASCL1/MASH1 to activate DLL4-NOTCH signaling and drive commitment of p2 progenitors to the V2b interneuron fates during spinal cord neurogenesis. In development of non-neural tissues, plays an essential role in the specification of the atrioventricular canal and is indirectly required for patterning the distal airway during lung development. The sequence is that of Forkhead box protein N4 (FOXN4) from Homo sapiens (Human).